The sequence spans 333 residues: Transcription initiation factor IIB (333 aa).

Residues 33-64 form a TFIIB-type zinc finger; it reads EVYKCPICGNDKFVYNYERGEAVCIVCGAVVQ. Positions 37, 40, 56, and 59 each coordinate Zn(2+). A run of 2 repeats spans residues 149–232 and 243–324.

Belongs to the TFIIB family.

Functionally, stabilizes TBP binding to an archaeal box-A promoter. Also responsible for recruiting RNA polymerase II to the pre-initiation complex (DNA-TBP-TFIIB). The sequence is that of Transcription initiation factor IIB from Pyrobaculum aerophilum (strain ATCC 51768 / DSM 7523 / JCM 9630 / CIP 104966 / NBRC 100827 / IM2).